The sequence spans 343 residues: Tetraacyldisaccharide 4'-kinase (343 aa).

51 to 58 contributes to the ATP binding site; it reads TVGGAGKT.

Belongs to the LpxK family.

It carries out the reaction a lipid A disaccharide + ATP = a lipid IVA + ADP + H(+). The protein operates within glycolipid biosynthesis; lipid IV(A) biosynthesis; lipid IV(A) from (3R)-3-hydroxytetradecanoyl-[acyl-carrier-protein] and UDP-N-acetyl-alpha-D-glucosamine: step 6/6. Its function is as follows. Transfers the gamma-phosphate of ATP to the 4'-position of a tetraacyldisaccharide 1-phosphate intermediate (termed DS-1-P) to form tetraacyldisaccharide 1,4'-bis-phosphate (lipid IVA). In Xanthobacter autotrophicus (strain ATCC BAA-1158 / Py2), this protein is Tetraacyldisaccharide 4'-kinase.